Reading from the N-terminus, the 360-residue chain is Phospho-N-acetylmuramoyl-pentapeptide-transferase (360 aa).

Transmembrane regions (helical) follow at residues 27 to 47, 71 to 91, 93 to 113, 128 to 148, 168 to 188, 199 to 219, 239 to 259, 262 to 282, 288 to 308, and 337 to 357; these read GAMI…INSL, TPTM…LLWA, LASV…AIGF, FSGK…AFTI, LVIN…VGAG, GLAI…AYLS, LAVV…FNAP, AIFM…TVAV, IVLA…IIQV, and QVVI…LSTL.

This sequence belongs to the glycosyltransferase 4 family. MraY subfamily. Mg(2+) serves as cofactor.

It is found in the cell inner membrane. The catalysed reaction is UDP-N-acetyl-alpha-D-muramoyl-L-alanyl-gamma-D-glutamyl-meso-2,6-diaminopimeloyl-D-alanyl-D-alanine + di-trans,octa-cis-undecaprenyl phosphate = di-trans,octa-cis-undecaprenyl diphospho-N-acetyl-alpha-D-muramoyl-L-alanyl-D-glutamyl-meso-2,6-diaminopimeloyl-D-alanyl-D-alanine + UMP. It participates in cell wall biogenesis; peptidoglycan biosynthesis. Functionally, catalyzes the initial step of the lipid cycle reactions in the biosynthesis of the cell wall peptidoglycan: transfers peptidoglycan precursor phospho-MurNAc-pentapeptide from UDP-MurNAc-pentapeptide onto the lipid carrier undecaprenyl phosphate, yielding undecaprenyl-pyrophosphoryl-MurNAc-pentapeptide, known as lipid I. This is Phospho-N-acetylmuramoyl-pentapeptide-transferase from Brucella ovis (strain ATCC 25840 / 63/290 / NCTC 10512).